A 137-amino-acid chain; its full sequence is Succinate dehydrogenase cytochrome b560 subunit (137 aa).

The next 2 helical transmembrane spans lie at 31 to 51 and 60 to 80; these read AFLATMVLFSILFFKIGDLSL and FFFLTFYLNWFIISLVNFTLL. His-85 serves as a coordination point for heme. Residues 106-126 form a helical membrane-spanning segment; sequence VYTSGIIMLFCAAFLALLNII.

The protein belongs to the cytochrome b560 family. As to quaternary structure, forms part of complex II containing four subunits: a 70 kDa flavoprotein (FP), a 27 kDa iron-sulfur protein (IP), a cytochrome B and a membrane-anchoring protein. Heme serves as cofactor.

Its subcellular location is the mitochondrion inner membrane. The protein operates within carbohydrate metabolism; tricarboxylic acid cycle. In terms of biological role, membrane-anchoring subunit of succinate dehydrogenase (SDH) that is involved in complex II of the mitochondrial electron transport chain and is responsible for transferring electrons from succinate to ubiquinone (coenzyme Q). This Marchantia polymorpha (Common liverwort) protein is Succinate dehydrogenase cytochrome b560 subunit (SDH3).